Consider the following 155-residue polypeptide: Ribosomal RNA large subunit methyltransferase H (155 aa).

S-adenosyl-L-methionine is bound by residues leucine 72, glycine 103, and 122 to 127 (LSTMTL).

This sequence belongs to the RNA methyltransferase RlmH family. In terms of assembly, homodimer.

The protein localises to the cytoplasm. The catalysed reaction is pseudouridine(1915) in 23S rRNA + S-adenosyl-L-methionine = N(3)-methylpseudouridine(1915) in 23S rRNA + S-adenosyl-L-homocysteine + H(+). In terms of biological role, specifically methylates the pseudouridine at position 1915 (m3Psi1915) in 23S rRNA. In Nitrosomonas eutropha (strain DSM 101675 / C91 / Nm57), this protein is Ribosomal RNA large subunit methyltransferase H.